The primary structure comprises 332 residues: Fructose-1,6-bisphosphatase class 1 (332 aa).

Positions 89, 110, 112, and 113 each coordinate Mg(2+). Substrate-binding positions include 113–116 (DGSS), Asn206, Tyr239, 257–259 (YLY), and Lys269. Glu275 lines the Mg(2+) pocket.

This sequence belongs to the FBPase class 1 family. In terms of assembly, homotetramer. It depends on Mg(2+) as a cofactor.

The protein resides in the cytoplasm. The enzyme catalyses beta-D-fructose 1,6-bisphosphate + H2O = beta-D-fructose 6-phosphate + phosphate. The protein operates within carbohydrate biosynthesis; gluconeogenesis. This is Fructose-1,6-bisphosphatase class 1 from Salmonella typhi.